The following is a 541-amino-acid chain: Methyl-accepting chemotaxis protein PcaY (541 aa).

Topologically, residues 1–10 (MLANLKIRTG) are cytoplasmic. The chain crosses the membrane as a helical span at residues 11-31 (MFWVLSLFSLTLLFSTASAWW). Topologically, residues 32–189 (AAVGSDQQIT…ESDRRLARAQ (158 aa)) are periplasmic. The interval 35–187 (GSDQQITELD…MLESDRRLAR (153 aa)) is ligand-binding domain. A helical membrane pass occupies residues 190–210 (LLSLCLLGMTVVLAVLCWAFI). The Cytoplasmic portion of the chain corresponds to 211-541 (AQRVLHPLRE…MTALVGRFKV (331 aa)). One can recognise an HAMP domain in the interval 212-264 (QRVLHPLREAGGHFRRIASGDLSVPVQGQGNNEIGQLFHELQRMQQSQRDTLG). In terms of domain architecture, Methyl-accepting transducer spans 269-505 (CARQLDAAAS…EVDRNLLNIR (237 aa)). The tract at residues 322 to 341 (TSQTTSESNQLAAQSRRQVS) is disordered.

Belongs to the methyl-accepting chemotaxis (MCP) protein family.

Its subcellular location is the cell inner membrane. In terms of biological role, chemotactic-signal transducers respond to changes in the concentration of attractants and repellents in the environment, transduce a signal from the outside to the inside of the cell, and facilitate sensory adaptation through the variation of the level of methylation. PcaY is responsible for the detection of multiple aromatic and hydroaromatic compounds that are metabolized through the beta-ketoadipate catabolic pathway, including vanillin, vanillate, 4-hydroxybenzoate (4-HBA), benzoate and protocatechuate. It also senses several nonmetabolizable aromatic compounds. The protein is Methyl-accepting chemotaxis protein PcaY of Pseudomonas putida (strain ATCC 700007 / DSM 6899 / JCM 31910 / BCRC 17059 / LMG 24140 / F1).